The sequence spans 521 residues: 4-cresol dehydrogenase [hydroxylating] flavoprotein subunit (521 aa).

Residues 54 to 268 (AAHAPSAAVT…VEIVDALRPL (215 aa)) form the FAD-binding PCMH-type domain. Tyrosine 384 is subject to O-8alpha-FAD tyrosine.

Tetramer of two cytochrome subunits and two flavoprotein subunits. It depends on FAD as a cofactor.

It catalyses the reaction 4-methylphenol + 4 oxidized [azurin] + H2O = 4 reduced [azurin] + 4-hydroxybenzaldehyde + 4 H(+). The protein operates within aromatic compound metabolism; p-cresol degradation. In terms of biological role, catalyzes the azurin dependent hydroxylation of the methyl group of 4-methylphenol to form 4-hydroxybenzaldehyde. The chain is 4-cresol dehydrogenase [hydroxylating] flavoprotein subunit (pchF) from Pseudomonas putida (Arthrobacter siderocapsulatus).